The sequence spans 274 residues: Large ribosomal subunit protein uL2 (274 aa).

Residues 221–256 (RGTAMNPVDHPHGGGEGRNFGKHPVTPWGVPTKGYK) are disordered.

This sequence belongs to the universal ribosomal protein uL2 family. In terms of assembly, part of the 50S ribosomal subunit. Forms a bridge to the 30S subunit in the 70S ribosome.

In terms of biological role, one of the primary rRNA binding proteins. Required for association of the 30S and 50S subunits to form the 70S ribosome, for tRNA binding and peptide bond formation. It has been suggested to have peptidyltransferase activity; this is somewhat controversial. Makes several contacts with the 16S rRNA in the 70S ribosome. This Thioalkalivibrio sulfidiphilus (strain HL-EbGR7) protein is Large ribosomal subunit protein uL2.